We begin with the raw amino-acid sequence, 250 residues long: 5'/3'-nucleotidase SurE (250 aa).

4 residues coordinate a divalent metal cation: aspartate 9, aspartate 10, serine 40, and asparagine 93.

This sequence belongs to the SurE nucleotidase family. A divalent metal cation is required as a cofactor.

It is found in the cytoplasm. It carries out the reaction a ribonucleoside 5'-phosphate + H2O = a ribonucleoside + phosphate. It catalyses the reaction a ribonucleoside 3'-phosphate + H2O = a ribonucleoside + phosphate. The catalysed reaction is [phosphate](n) + H2O = [phosphate](n-1) + phosphate + H(+). In terms of biological role, nucleotidase with a broad substrate specificity as it can dephosphorylate various ribo- and deoxyribonucleoside 5'-monophosphates and ribonucleoside 3'-monophosphates with highest affinity to 3'-AMP. Also hydrolyzes polyphosphate (exopolyphosphatase activity) with the preference for short-chain-length substrates (P20-25). Might be involved in the regulation of dNTP and NTP pools, and in the turnover of 3'-mononucleotides produced by numerous intracellular RNases (T1, T2, and F) during the degradation of various RNAs. The chain is 5'/3'-nucleotidase SurE from Yersinia enterocolitica serotype O:8 / biotype 1B (strain NCTC 13174 / 8081).